Here is a 490-residue protein sequence, read N- to C-terminus: Cobyric acid synthase (490 aa).

The region spanning 252-439 is the GATase cobBQ-type domain; that stretch reads RLKVVVPVLP…LHGLFESTAA (188 aa). Cys-333 acts as the Nucleophile in catalysis. The active site involves His-431.

It belongs to the CobB/CobQ family. CobQ subfamily.

The protein operates within cofactor biosynthesis; adenosylcobalamin biosynthesis. Catalyzes amidations at positions B, D, E, and G on adenosylcobyrinic A,C-diamide. NH(2) groups are provided by glutamine, and one molecule of ATP is hydrogenolyzed for each amidation. The protein is Cobyric acid synthase of Pseudomonas aeruginosa (strain UCBPP-PA14).